We begin with the raw amino-acid sequence, 117 residues long: Large ribosomal subunit protein uL18 (117 aa).

It belongs to the universal ribosomal protein uL18 family. Part of the 50S ribosomal subunit; part of the 5S rRNA/L5/L18/L25 subcomplex. Contacts the 5S and 23S rRNAs.

Functionally, this is one of the proteins that bind and probably mediate the attachment of the 5S RNA into the large ribosomal subunit, where it forms part of the central protuberance. This Aster yellows witches'-broom phytoplasma (strain AYWB) protein is Large ribosomal subunit protein uL18.